The primary structure comprises 354 residues: Guanine nucleotide-binding protein G(i) subunit alpha (354 aa).

Glycine 2 carries the N-myristoyl glycine lipid modification. Cysteine 3 carries S-palmitoyl cysteine lipidation. The 323-residue stretch at 32–354 (REVKLLLLGA…KNNLKDCGLF (323 aa)) folds into the G-alpha domain. Residues 35-48 (KLLLLGAGESGKST) form a G1 motif region. GTP contacts are provided by residues 40-47 (GAGESGKS), 175-181 (LRTRVKT), 200-204 (DVGGQ), 269-272 (NKKD), and alanine 326. Mg(2+) contacts are provided by serine 47 and threonine 181. Residues 173–181 (DVLRTRVKT) are G2 motif. The interval 196–205 (FKMFDVGGQR) is G3 motif. The segment at 265–272 (ILFLNKKD) is G4 motif. Residues 324–329 (TCATDT) are G5 motif.

It belongs to the G-alpha family. G(i/o/t/z) subfamily. G proteins are composed of 3 units; alpha, beta and gamma. The alpha chain contains the guanine nucleotide binding site.

Its function is as follows. Guanine nucleotide-binding proteins (G proteins) are involved as modulators or transducers in various transmembrane signaling systems. The G(i) proteins are involved in hormonal regulation of adenylate cyclase: they inhibit the cyclase in response to beta-adrenergic stimuli. This chain is Guanine nucleotide-binding protein G(i) subunit alpha, found in Lymnaea stagnalis (Great pond snail).